A 59-amino-acid polypeptide reads, in one-letter code: Metallothionein-1B (59 aa).

Residues 1 to 29 form a beta region; it reads MPGPCCNDKCVCQEGGCKAGCQCTSCRCS. Residues cysteine 5, cysteine 6, cysteine 10, cysteine 17, cysteine 21, cysteine 23, cysteine 26, cysteine 28, cysteine 31, cysteine 34, cysteine 38, cysteine 40, cysteine 46, cysteine 50, cysteine 54, cysteine 56, and cysteine 57 each coordinate a divalent metal cation. Positions 30–59 are alpha; that stretch reads PCQKCTSGCKCATKEECSKTCTKPCSCCPK.

Belongs to the metallothionein superfamily. Type 3 family.

In terms of biological role, binds six divalent metal ions. Known to bind copper and cadmium. The polypeptide is Metallothionein-1B (Callinectes sapidus (Blue crab)).